The chain runs to 415 residues: Protein fuzzy homolog (415 aa).

It belongs to the fuzzy family. Component of the CPLANE (ciliogenesis and planar polarity effectors) complex, composed of INTU, FUZ and WDPCP. Interacts with CPLANE1 and CPLANE2.

Its subcellular location is the cytoplasm. The protein localises to the cytoskeleton. It localises to the cilium basal body. Its function is as follows. Probable planar cell polarity effector involved in cilium biogenesis. Proposed to function as core component of the CPLANE (ciliogenesis and planar polarity effectors) complex involved in the recruitment of peripheral IFT-A proteins to basal bodies. May regulate protein and membrane transport to the cilium. May regulate the morphogenesis of hair follicles which depends on functional primary cilia. Binds phosphatidylinositol 3-phosphate with highest affinity, followed by phosphatidylinositol 4-phosphate and phosphatidylinositol 5-phosphate. The chain is Protein fuzzy homolog (Fuz) from Rattus norvegicus (Rat).